We begin with the raw amino-acid sequence, 710 residues long: Dihydroxyacetone synthase (710 aa).

Residues His-78 and 128 to 130 each bind thiamine diphosphate; that span reads GPL. Mg(2+) contacts are provided by Asp-169, Asn-199, and Val-201. Residue Asn-199 participates in thiamine diphosphate binding. Residues His-275, Glu-433, and Phe-461 each contribute to the thiamine diphosphate site. Residue Glu-433 is the Proton donor of the active site. Positions 708-710 match the Microbody targeting signal motif; it reads NKL.

This sequence belongs to the transketolase family. It depends on Mg(2+) as a cofactor. Requires Ca(2+) as cofactor. Mn(2+) is required as a cofactor. The cofactor is Co(2+). Thiamine diphosphate serves as cofactor.

Its subcellular location is the peroxisome. It carries out the reaction D-xylulose 5-phosphate + formaldehyde = dihydroxyacetone + D-glyceraldehyde 3-phosphate. This is the major methanol assimilatory enzyme from the methylotrophic Hansenula polymorpha. In Pichia angusta (Yeast), this protein is Dihydroxyacetone synthase (DAS).